A 292-amino-acid chain; its full sequence is Ribosomal protein L11 methyltransferase (292 aa).

Positions 145, 166, 188, and 229 each coordinate S-adenosyl-L-methionine.

This sequence belongs to the methyltransferase superfamily. PrmA family.

It is found in the cytoplasm. The catalysed reaction is L-lysyl-[protein] + 3 S-adenosyl-L-methionine = N(6),N(6),N(6)-trimethyl-L-lysyl-[protein] + 3 S-adenosyl-L-homocysteine + 3 H(+). Functionally, methylates ribosomal protein L11. The polypeptide is Ribosomal protein L11 methyltransferase (Nitrosococcus oceani (strain ATCC 19707 / BCRC 17464 / JCM 30415 / NCIMB 11848 / C-107)).